The chain runs to 257 residues: 5'-nucleotidase SurE (257 aa).

A divalent metal cation is bound by residues Asp9, Asp10, Ser42, and Asn96.

This sequence belongs to the SurE nucleotidase family. A divalent metal cation serves as cofactor.

It is found in the cytoplasm. The enzyme catalyses a ribonucleoside 5'-phosphate + H2O = a ribonucleoside + phosphate. Nucleotidase that shows phosphatase activity on nucleoside 5'-monophosphates. This chain is 5'-nucleotidase SurE, found in Campylobacter lari (strain RM2100 / D67 / ATCC BAA-1060).